The chain runs to 512 residues: ATP synthase subunit alpha (512 aa).

169 to 176 (GDRQTGKT) is a binding site for ATP.

This sequence belongs to the ATPase alpha/beta chains family. As to quaternary structure, F-type ATPases have 2 components, CF(1) - the catalytic core - and CF(0) - the membrane proton channel. CF(1) has five subunits: alpha(3), beta(3), gamma(1), delta(1), epsilon(1). CF(0) has three main subunits: a(1), b(2) and c(9-12). The alpha and beta chains form an alternating ring which encloses part of the gamma chain. CF(1) is attached to CF(0) by a central stalk formed by the gamma and epsilon chains, while a peripheral stalk is formed by the delta and b chains.

The protein resides in the cell membrane. It carries out the reaction ATP + H2O + 4 H(+)(in) = ADP + phosphate + 5 H(+)(out). In terms of biological role, produces ATP from ADP in the presence of a proton gradient across the membrane. The alpha chain is a regulatory subunit. The polypeptide is ATP synthase subunit alpha (Buchnera aphidicola subsp. Acyrthosiphon pisum (strain 5A)).